The primary structure comprises 819 residues: FYN-binding protein 1 (819 aa).

Positions 1 to 45 are enriched in polar residues; sequence MAKFNTGSNPTEEAATSSRPFKVAGQSSPSGIQSRKNLFDNQGNA. The tract at residues 1–490 is disordered; sequence MAKFNTGSNP…REKKEQELKK (490 aa). Lys-3 bears the N6-acetyllysine mark. 2 positions are modified to phosphoserine: Ser-28 and Ser-46. Positions 69–79 are enriched in basic and acidic residues; it reads TYEEKPEKEPK. A compositionally biased stretch (pro residues) spans 150–160; that stretch reads GPKPGPAPPVP. Phosphoserine is present on Ser-222. Basic and acidic residues-rich tracts occupy residues 237 to 248 and 273 to 285; these read PPKEDPEDKDHG and NFEE…KTDL. Ser-318 bears the Phosphoserine mark. 2 stretches are compositionally biased toward pro residues: residues 342 to 351 and 380 to 412; these read GPPPPKPNRP and LPPP…PRNI. Positions 439–453 are enriched in acidic residues; that stretch reads LEEEQESEGETYEDI. Ser-445 carries the phosphoserine modification. Positions 448–495 form a coiled coil; the sequence is ETYEDIDSSKERDKKREKEEKKRLELERKEQKEREKKEQELKKKFKLT. Over residues 454–489 the composition is skewed to basic and acidic residues; it reads DSSKERDKKREKEEKKRLELERKEQKEREKKEQELK. The Nuclear localization signal signature appears at 479 to 493; that stretch reads KEREKKEQELKKKFK. The region spanning 499-560 is the SH3 1 domain; the sequence is QVIHHAKACC…KTTAVEIDYD (62 aa). The residue at position 559 (Tyr-559) is a Phosphotyrosine. Residues Ser-561 and Ser-568 each carry the phosphoserine modification. The short motif at 584-587 is the SH2-binding; to LCP2 element; it reads YDDV. Disordered regions lie at residues 589–635 and 649–728; these read EQDA…DEKT and KDDR…EKEE. Acidic residues predominate over residues 610–626; the sequence is TDDEIYDGIEEEDDDDG. The SH2-binding; to FYN motif lies at 615-618; that stretch reads YDGI. The span at 649-664 shows a compositional bias: basic and acidic residues; sequence KDDRKKSIREKPKVSE. The segment covering 668–677 has biased composition (polar residues); it reads NEGSSLPSQH. The span at 682–692 shows a compositional bias: acidic residues; sequence VGEEVYDDVDA. Tyr-687 carries the post-translational modification Phosphotyrosine. Positions 710–736 match the Nuclear localization signal motif; sequence RAKTEEKDPKKLKKQEKEEKDLRKKFK. Positions 711-728 are enriched in basic and acidic residues; the sequence is AKTEEKDPKKLKKQEKEE. The region spanning 736–804 is the SH3 2 domain; it reads KYDGEIRVLY…LRSYLVDNDG (69 aa).

Part of a complex consisting of SKAP2, FYB1 and PTPNS1. Part of a complex consisting of SKAP2, FYB1 and PIRB. Part of a complex consisting of SKAP1, FYB1 and CLNK. Interacts with CLNK (via its SH2 domain); this interaction allows SKAP1 and FYB1 to recruit FYN to the complex, thus promoting the phosphorylation of CLNK by FYN. Interacts with FYN. Interacts with LCP2. Interacts with SKAP1. Interacts with SKAP2. Interacts with FASLG. Interacts with EVL. Interacts with TMEM47. Interacts with LCK. Post-translationally, T-cell receptor ligation leads to increased tyrosine phosphorylation. In terms of tissue distribution, expressed in hematopoietic tissues such as myeloid and T-cells, spleen and thymus. Not expressed in B-cells, nor in non-lymphoid tissues. FYB-130 is preferentially expressed in mature T-cells compared to FYB-120, whereas thymocytes showed a greater relative amount of FYB-120. Expressed in podocytes.

The protein resides in the cytoplasm. The protein localises to the nucleus. It is found in the cell junction. Its function is as follows. Acts as an adapter protein of the FYN and LCP2 signaling cascades in T-cells. May play a role in linking T-cell signaling to remodeling of the actin cytoskeleton. Modulates the expression of IL2. Involved in platelet activation. Prevents the degradation of SKAP1 and SKAP2. May be involved in high affinity immunoglobulin epsilon receptor signaling in mast cells. This Mus musculus (Mouse) protein is FYN-binding protein 1 (Fyb1).